Consider the following 758-residue polypeptide: CRISPR system single-strand-specific deoxyribonuclease Cas10/Csm1 (subtype III-A) (758 aa).

The tract at residues 1 to 82 (MKKEKIDLFY…TYIADNIASG (82 aa)) is HD domain. In terms of domain architecture, GGDEF spans 509–647 (KRLAVVRLDV…EKDSISLFSS (139 aa)).

This sequence belongs to the CRISPR-associated Cas10/Csm1 family. As to quaternary structure, part of the Csm effector complex that includes at least Cas10(1), Csm2(3), Csm3(5), Csm4(1), Csm5(1) and mature crRNA. The Csm complex is elongated and slightly twisted with a maximal length of 215 Angstroms and a diameter of 75-80 Angstroms. It has been modeled to have a central protein filamant of Csm3 subunits along which the dsRNA helix of paired crRNA and target RNA binds. The filament is capped at one end by Cas10 and Csm4 and at the other end by Csm5; ssDNA is thought to bind to the N-terminal HD domain of Cas10. Csm with a precursor crRNA does not include Csm5, while Cas6, the enzyme probably involved in pre-crRNA processing, is found associated with a subset of the Csm complex. The cofactor is a divalent metal cation.

The catalysed reaction is 6 ATP = cyclic hexaadenylate + 6 diphosphate. Its activity is regulated as follows. ssDNase activity is activated by target RNA binding to the Csm-crRNA complex and is inhibited by EDTA. Its function is as follows. CRISPR (clustered regularly interspaced short palindromic repeat) is an adaptive immune system that provides protection against mobile genetic elements (viruses, transposable elements and conjugative plasmids). CRISPR clusters contain spacers, sequences complementary to antecedent mobile elements, and target invading nucleic acids. CRISPR clusters are transcribed and processed into CRISPR RNA (crRNA). The type III-A Csm effector complex binds crRNA and acts as a crRNA-guided RNase, DNase and cyclic oligoadenylate synthase; binding of target RNA cognate to the crRNA is required for all activities. In a heterologous host this Csm effector complex restricts ssRNA phage MS2, suggesting it may target RNA viruses in vivo. Csm functions as a non-specific ssDNase. Base-pairing between crRNA and target RNA to form a ternary Csm complex activates a ssDNase activity; target RNA cleavage suppresses the ssDNase, a temporal control that prevents uncontrolled DNA degradation. Viral RNA transcripts probably tether the Csm complex to the viral genome, recruiting Cas10 ssDNA activity which is able to degrade DNA in the transcription bubble, spatially controlling the DNase activity. Functionally, this subunit has a weak ssDNase activity that is dramatically activated by the ternary Csm effector complex (the crRNA, Cas proteins and a cognate target ssRNA). Target RNA and ssDNA are cleaved simultaneously, although RNase activity (of Csm3) is much faster. RNA cleavage by Csm3 is not required for ssDNase activity as Csm complex with inactive Csm3 still has ssDNase activity; however as the cleaved target RNA products dissociate away ssDNase activity decreases. Self-recognition, with subsequent repression of the ssDNase activity, occurs when the 5' handle of the crRNA bases pairs with the 3' flanking sequence of the target RNA (which would occur if the CRISPR locus were transcribed as an anti-pre-crRNA). This protein has low activity on dsDNA which is not stimulated by the Csm complex. In terms of biological role, this subunit is a single-strand-specific deoxyribonuclease (ssDNase) which digests both linear and circular ssDNA; it has both exo- and endonuclease activity. Its function is as follows. When associated with the ternary Csm effector complex (the crRNA, Cas proteins and a cognate target ssRNA) synthesizes cyclic oligoadenylates (cOA) from ATP, producing cyclic triadenylate (cA3) up to cyclic hexaadenylate (cA6), which is the active cOA. The enzyme is also able to cyclize pppA3 up to pppA6. cOAs are second messengers that induce an antiviral state important for defense against invading nucleic acids. Synthesis of cOA can occur with AMP plus ATP, 2'dATP or 3'dATP (but no other nucleotides), and requires a free 3'-OH ribose moiety. In Streptococcus thermophilus, this protein is CRISPR system single-strand-specific deoxyribonuclease Cas10/Csm1 (subtype III-A).